Here is a 164-residue protein sequence, read N- to C-terminus: Ubiquitin-fold modifier-conjugating enzyme 1 (164 aa).

Cys-116 functions as the Glycyl thioester intermediate in the catalytic mechanism.

The protein belongs to the ubiquitin-conjugating enzyme family. UFC1 subfamily.

Functionally, E2-like enzyme which forms an intermediate with UFM1 via a thioester linkage. In Drosophila persimilis (Fruit fly), this protein is Ubiquitin-fold modifier-conjugating enzyme 1.